The primary structure comprises 160 residues: Globin CTT-Y (160 aa).

Residues 1–16 form the signal peptide; that stretch reads MKVLAIFALCIIGALA. Residues 17–160 form the Globin domain; that stretch reads TPCDDFKIMQ…IRKVINANLE (144 aa). Positions 74 and 109 each coordinate heme b.

This sequence belongs to the globin family.

This Chironomus thummi piger (Midge) protein is Globin CTT-Y (CTT-Y).